The chain runs to 450 residues: MIGPRLCAATPRFPLVSLAHRNSKVFALASSNAVAQRWGKRFYAPIETETPHKVGVEFEESKDRIFTSPQKYVQGRHAFTRSYMYVKKWATKSAVVLADQNVWNICANKIVDSLSQNGMTVTKLVFGGEASLVELDKLRKQCPDDTQVIIGVGGGKTMDSAKYIAHSMNLPSIICPTTASSDAATSSLSVIYTPDGQFQKYSFYPLNPNLIFIDTDVIVRAPVRFLISGIGDALSTWVETESVIRSNSTSFAGGVASIAGRYIARACKDTLEKYALSAILSNTRGVCTEAFENVVEANTLMSGLGFENGGLAAAHAIHNGMTAIHGPVHRLMHGEKVAYGTLVQVVLEDWPLEDFNNLASFMAKCHLPITLEELGIPNVTDEELLMVGRATLRPDESIHNMSKKFNPSQIADAIKAVDSYSQKWQEQTGWTERFRLPPSRHSPHLTDIHP.

Residues aspartate 99, 155 to 159, and 177 to 180 each bind NAD(+); these read GKTMD and TTAS. Aspartate 182 contributes to the substrate binding site. 3 residues coordinate NAD(+): serine 186, leucine 188, and tyrosine 192. Positions 232, 315, and 333 each coordinate substrate. 3 residues coordinate Zn(2+): aspartate 232, histidine 315, and histidine 333.

This sequence belongs to the iron-containing alcohol dehydrogenase family. Zn(2+) serves as cofactor.

Its subcellular location is the mitochondrion. It catalyses the reaction glycerol + NAD(+) = dihydroxyacetone + NADH + H(+). It participates in polyol metabolism; glycerol fermentation; glycerone phosphate from glycerol (oxidative route): step 1/2. Glycerol dehydrogenase involved in the assimilation of glycerol. The chain is Glycerol dehydrogenase 1 (gld1) from Schizosaccharomyces pombe (strain 972 / ATCC 24843) (Fission yeast).